We begin with the raw amino-acid sequence, 345 residues long: S-adenosylmethionine:tRNA ribosyltransferase-isomerase (345 aa).

This sequence belongs to the QueA family. Monomer.

It is found in the cytoplasm. It catalyses the reaction 7-aminomethyl-7-carbaguanosine(34) in tRNA + S-adenosyl-L-methionine = epoxyqueuosine(34) in tRNA + adenine + L-methionine + 2 H(+). Its pathway is tRNA modification; tRNA-queuosine biosynthesis. Functionally, transfers and isomerizes the ribose moiety from AdoMet to the 7-aminomethyl group of 7-deazaguanine (preQ1-tRNA) to give epoxyqueuosine (oQ-tRNA). In Lactococcus lactis subsp. lactis (strain IL1403) (Streptococcus lactis), this protein is S-adenosylmethionine:tRNA ribosyltransferase-isomerase.